We begin with the raw amino-acid sequence, 501 residues long: Phosphatidylinositol 4-kinase type 2-beta (501 aa).

Disordered stretches follow at residues 1 to 30 and 65 to 122; these read MMAE…SSEV and TELE…NHFP. A compositionally biased stretch (polar residues) spans 17–27; that stretch reads GDSTPETNFLS. Low complexity predominate over residues 76–88; that stretch reads ALLLPGPAGSLSP. Polar residues predominate over residues 99–117; sequence NMLSSSSDNLASPGNSSGE. Positions 141 to 471 constitute a PI3K/PI4K catalytic domain; that stretch reads GVFPERISQG…VQMPRVVVER (331 aa). Residues 147 to 153 form a G-loop region; it reads ISQGSSG. ATP-binding residues include serine 154 and lysine 169. Positions 174 to 176 are important for substrate binding; it reads EPY. Positions 182 to 195 are important for interaction with membranes; that stretch reads KWTKYFHKVCCPCC. ATP is bound by residues 278–281 and 292–293; these read QLFV and RK. Residues 285 to 293 form an important for interaction with membranes region; it reads HEADFWLRK. Residues 322–330 are catalytic loop; it reads RNTDRGNDN. The activation loop stretch occupies residues 362-382; sequence AIDNGLAFPFKHPDEWRAYPF. Aspartate 364 contacts ATP. The interval 377 to 386 is important for interaction with membranes; that stretch reads WRAYPFHWAW.

Belongs to the PI3/PI4-kinase family. Type II PI4K subfamily.

The protein resides in the cytoplasm. Its subcellular location is the cytosol. The protein localises to the golgi apparatus membrane. It localises to the endoplasmic reticulum membrane. It is found in the cell membrane. The protein resides in the early endosome membrane. The enzyme catalyses a 1,2-diacyl-sn-glycero-3-phospho-(1D-myo-inositol) + ATP = a 1,2-diacyl-sn-glycero-3-phospho-(1D-myo-inositol 4-phosphate) + ADP + H(+). In terms of biological role, contributes to the overall PI4-kinase activity of the cell. This contribution may be especially significant in plasma membrane, endosomal and Golgi compartments. The phosphorylation of phosphatidylinositol (PI) to PI4P is the first committed step in the generation of phosphatidylinositol 4,5-bisphosphate (PIP2), a precursor of the second messenger inositol 1,4,5-trisphosphate (InsP3). This chain is Phosphatidylinositol 4-kinase type 2-beta (pi4k2b), found in Danio rerio (Zebrafish).